Consider the following 546-residue polypeptide: Probable protein kinase UbiB (546 aa).

The region spanning 124-502 (DFSVEPLASA…HVRQGQSRYL (379 aa)) is the Protein kinase domain. ATP is bound by residues 130-138 (LASASIAQV) and K153. Catalysis depends on D288, which acts as the Proton acceptor. 2 helical membrane-spanning segments follow: residues 501–521 (YLFG…IHRP) and 522–542 (EWGM…LIGW).

It belongs to the ABC1 family. UbiB subfamily.

The protein resides in the cell inner membrane. The protein operates within cofactor biosynthesis; ubiquinone biosynthesis [regulation]. Its function is as follows. Is probably a protein kinase regulator of UbiI activity which is involved in aerobic coenzyme Q (ubiquinone) biosynthesis. The polypeptide is Probable protein kinase UbiB (Klebsiella pneumoniae (strain 342)).